Reading from the N-terminus, the 313-residue chain is Ubiquitin-conjugating enzyme E2 Z (313 aa).

The UBC core domain occupies 58–212 (QCVLRIKRDI…IRHETIRVAV (155 aa)). Residue Cys147 is the Glycyl thioester intermediate of the active site. The disordered stretch occupies residues 283–313 (VREKHRKETVDIDSDSSSSETETDTQGSSNP). Residues 297–313 (DSSSSETETDTQGSSNP) are compositionally biased toward low complexity.

This sequence belongs to the ubiquitin-conjugating enzyme family.

It is found in the cytoplasm. Its subcellular location is the nucleus. The enzyme catalyses S-ubiquitinyl-[E1 ubiquitin-activating enzyme]-L-cysteine + [E2 ubiquitin-conjugating enzyme]-L-cysteine = [E1 ubiquitin-activating enzyme]-L-cysteine + S-ubiquitinyl-[E2 ubiquitin-conjugating enzyme]-L-cysteine.. The protein operates within protein modification; protein ubiquitination. In terms of biological role, catalyzes the covalent attachment of ubiquitin to other proteins. May be involved in apoptosis regulation. This Xenopus tropicalis (Western clawed frog) protein is Ubiquitin-conjugating enzyme E2 Z (ube2z).